Here is a 400-residue protein sequence, read N- to C-terminus: Elongation factor Tu (400 aa).

Residues 10–209 (KPHVNIGTIG…EVDNYIPTPE (200 aa)) enclose the tr-type G domain. Residues 19-26 (GHVDHGKT) form a G1 region. 19–26 (GHVDHGKT) serves as a coordination point for GTP. Thr26 lines the Mg(2+) pocket. A G2 region spans residues 60–64 (GITIN). The G3 stretch occupies residues 81–84 (DCPG). GTP is bound by residues 81–85 (DCPGH) and 136–139 (NKCD). Residues 136 to 139 (NKCD) form a G4 region. Residues 174–176 (SAL) form a G5 region.

It belongs to the TRAFAC class translation factor GTPase superfamily. Classic translation factor GTPase family. EF-Tu/EF-1A subfamily. Monomer.

It localises to the cytoplasm. The catalysed reaction is GTP + H2O = GDP + phosphate + H(+). Its function is as follows. GTP hydrolase that promotes the GTP-dependent binding of aminoacyl-tRNA to the A-site of ribosomes during protein biosynthesis. This is Elongation factor Tu from Ruminiclostridium cellulolyticum (strain ATCC 35319 / DSM 5812 / JCM 6584 / H10) (Clostridium cellulolyticum).